An 801-amino-acid chain; its full sequence is Interleukin-4 receptor subunit alpha (801 aa).

The signal sequence occupies residues 1-25; the sequence is MGWLCTKFLSSVSCLILLWVTGSGG. Residues 26–232 are Extracellular-facing; the sequence is IKVLGDPTCF…NHFQLPLLQR (207 aa). Cysteines 34 and 44 form a disulfide. N-linked (GlcNAc...) asparagine glycosylation is present at N71. A disulfide bridge links C74 with C86. Residues 125 to 223 form the Fibronectin type-III domain; sequence APDNLTLHTN…EWSPSITWYN (99 aa). N-linked (GlcNAc...) asparagine glycosylation is found at N128, N134, and N162. At S164 the chain carries Phosphoserine. N176 carries an N-linked (GlcNAc...) asparagine glycan. The short motif at 212–216 is the WSXWS motif element; sequence WSEWS. The helical transmembrane segment at 233 to 256 threads the bilayer; sequence LPLGVSISCICILLFCLTCYFSII. Residues 257–801 are Cytoplasmic-facing; it reads KIKKIWWDQI…PVGTLGVTVS (545 aa). A Box 1 motif motif is present at residues 262-270; sequence WWDQIPTPA. Residues 424 to 476 form a disordered region; it reads VGQSSMAESSSLLPSESGQASTSWACFPTGPSETTCQVTGQQPPHPDPERATG. Residues 426–444 show a composition bias toward low complexity; that stretch reads QSSMAESSSLLPSESGQAS. The segment at 439–549 is required for IRS1 activation and IL4-induced cell growth; that stretch reads ESGQASTSWA…ESWEQILHMS (111 aa). The span at 454 to 465 shows a compositional bias: polar residues; it reads PSETTCQVTGQQ. A Phosphotyrosine modification is found at Y492. A disordered region spans residues 493–515; the sequence is RSFSDFSSPAPNPGELASEQKQA. The segment at 549–644 is required for IL4-induced gene expression; that stretch reads SVLQHGTAGS…NSMPLFTFGL (96 aa). Phosphotyrosine is present on residues Y566, Y594, and Y622. Residues 698–703 carry the ITIM motif motif; the sequence is IVYSSL. Positions 767–801 are disordered; that stretch reads RTPSNLSGVGKGPGHSPVPSQTTEVPVGTLGVTVS.

This sequence belongs to the type I cytokine receptor family. Type 4 subfamily. In terms of assembly, the functional IL4 receptor is formed by initial binding of IL4 to IL4R. Subsequent recruitment to the complex of the common gamma chain, in immune cells, creates a type I receptor and, in non-immune cells, of IL13RA1 forms a type II receptor. IL4R can also interact with the IL13/IL13RA1 complex to form a similar type II receptor. Interacts with PIK3C3. Interacts with the SH2-containing phosphatases, PTPN6/SHIP1, PTPN11/SHIP2 and INPP5D/SHIP. Interacts with JAK1 through a Box 1-containing region; inhibited by SOCS5. Interacts with SOCS5; inhibits IL4 signaling. Interacts with JAK3. Interacts with CLM1. Interacts with IL13RA2. Post-translationally, on IL4 binding, phosphorylated on C-terminal tyrosine residues. As to expression, isoform 2 is expressed in kidney, spleen, lung and liver.

Its subcellular location is the cell membrane. It is found in the secreted. Its function is as follows. Receptor for both interleukin 4 and interleukin 13. Couples to the JAK1/2/3-STAT6 pathway. The IL4 response is involved in promoting Th2 differentiation. The IL4/IL13 responses are involved in regulating IgE production and, chemokine and mucus production at sites of allergic inflammation. In certain cell types, can signal through activation of insulin receptor substrates, IRS1/IRS2. Isoform 2 (soluble form) inhibits IL4-induced spleen cell proliferation. This is Interleukin-4 receptor subunit alpha (Il4r) from Rattus norvegicus (Rat).